The following is a 139-amino-acid chain: D-ribose pyranase (139 aa).

The active-site Proton donor is the histidine 20. Residues aspartate 28, histidine 106, and 128–130 each bind substrate; that span reads FAN.

Belongs to the RbsD / FucU family. RbsD subfamily. As to quaternary structure, homodecamer.

Its subcellular location is the cytoplasm. It carries out the reaction beta-D-ribopyranose = beta-D-ribofuranose. It functions in the pathway carbohydrate metabolism; D-ribose degradation; D-ribose 5-phosphate from beta-D-ribopyranose: step 1/2. Catalyzes the interconversion of beta-pyran and beta-furan forms of D-ribose. The chain is D-ribose pyranase from Yersinia enterocolitica serotype O:8 / biotype 1B (strain NCTC 13174 / 8081).